Reading from the N-terminus, the 375-residue chain is Actin (375 aa).

This sequence belongs to the actin family.

The protein localises to the cytoplasm. The protein resides in the cytoskeleton. It carries out the reaction ATP + H2O = ADP + phosphate + H(+). Functionally, actins are highly conserved proteins that are involved in various types of cell motility and are ubiquitously expressed in all eukaryotic cells. The polypeptide is Actin (Sterkiella cavicola (Ciliate)).